A 619-amino-acid chain; its full sequence is ATP-dependent zinc metalloprotease FtsH (619 aa).

Residues 1–11 lie on the Cytoplasmic side of the membrane; it reads MDKQSKFRIKT. Residues 12 to 32 form a helical membrane-spanning segment; it reads FFKKIIFFLIIFCFFYFFNFI. The Periplasmic segment spans residues 33–131; it reads KKTKKITHTT…FKNYKIYTVL (99 aa). A helical membrane pass occupies residues 132 to 152; that stretch reads NFFYDYGFFLMIIIICWIFIF. Residues 153 to 619 are Cytoplasmic-facing; it reads RKIASRSSES…FKEDFASILD (467 aa). ATP is bound at residue 224-231; it reads GPPGTGKT. A Zn(2+)-binding site is contributed by His-447. Residue Glu-448 is part of the active site. Residues His-451 and Asp-522 each coordinate Zn(2+).

This sequence in the central section; belongs to the AAA ATPase family. In the C-terminal section; belongs to the peptidase M41 family. As to quaternary structure, homohexamer. The cofactor is Zn(2+).

It is found in the cell inner membrane. Its function is as follows. Acts as a processive, ATP-dependent zinc metallopeptidase for both cytoplasmic and membrane proteins. Plays a role in the quality control of integral membrane proteins. This chain is ATP-dependent zinc metalloprotease FtsH, found in Karelsulcia muelleri (strain DMIN) (Sulcia muelleri).